A 482-amino-acid polypeptide reads, in one-letter code: Serine carboxypeptidase-like 26 (482 aa).

Residues 1 to 28 form the signal peptide; that stretch reads MAVAAAAAARRRDVSCLLLLLCFSSSMA. Intrachain disulfides connect cysteine 101–cysteine 366, cysteine 263–cysteine 274, and cysteine 298–cysteine 333. Asparagine 152 carries N-linked (GlcNAc...) asparagine glycosylation. Residue serine 194 is part of the active site. N-linked (GlcNAc...) asparagine glycosylation is found at asparagine 269, asparagine 301, asparagine 354, and asparagine 375. Residues aspartate 403 and histidine 455 contribute to the active site.

Belongs to the peptidase S10 family.

The protein localises to the secreted. Its function is as follows. Acts as a positive regulator of grain size by controlling grain width, filling and weight. High expression of GS5 in the grain is correlated with large grain size. The sequence is that of Serine carboxypeptidase-like 26 from Oryza sativa subsp. japonica (Rice).